We begin with the raw amino-acid sequence, 137 residues long: Large ribosomal subunit protein uL16 (137 aa).

The disordered stretch occupies residues 1 to 20 (MLQPSNRKYRKDFKGRNRGV). A compositionally biased stretch (basic residues) spans 7-17 (RKYRKDFKGRN).

The protein belongs to the universal ribosomal protein uL16 family. Part of the 50S ribosomal subunit.

Functionally, binds 23S rRNA and is also seen to make contacts with the A and possibly P site tRNAs. In Coxiella burnetii (strain CbuK_Q154) (Coxiella burnetii (strain Q154)), this protein is Large ribosomal subunit protein uL16.